The primary structure comprises 161 residues: Sterile alpha motif domain-containing protein 12 (161 aa).

The disordered stretch occupies residues 44–64 (QKVPDQKGTPKRLQGEAETAK). The region spanning 77-143 (WTQQDVCKWL…LQQVLQLKVR (67 aa)) is the SAM domain.

This Mus musculus (Mouse) protein is Sterile alpha motif domain-containing protein 12 (Samd12).